The chain runs to 204 residues: Apoptosis regulator R11 (204 aa).

A BH1 motif is present at residues 101-120 (ELFRDGTNWGRIVAFFSFGR). The short motif at 152–167 (PWMQENGGWEAFVGLY) is the BH2 element. A helical transmembrane segment spans residues 181 to 198 (RFGRLLTIVMLTGVFALV).

Belongs to the Bcl-2 family.

It is found in the membrane. Functionally, confers strong protection against cell death. In Xenopus laevis (African clawed frog), this protein is Apoptosis regulator R11.